A 735-amino-acid polypeptide reads, in one-letter code: DNA replication licensing factor mcm5 (735 aa).

The 207-residue stretch at 332 to 538 (IYETVAKSIA…RDMTLAKHVM (207 aa)) folds into the MCM domain. Arg372 is an ADP binding site. The short motif at 513–516 (SRFD) is the Arginine finger element.

This sequence belongs to the MCM family. Component of the mcm2-7 complex (RLF-M). The complex forms a toroidal hexameric ring with the proposed subunit order mcm2-mcm6-mcm4-mcm7-mcm3-mcm5. The heterodimer of mmcm3/mcm5 interacts with mcm4, mmcm6, mcm7 and weakly with mcm2. Component of the CMG helicase complex, composed of the mcm2-7 complex, the GINS complex and cdc45.

The protein resides in the nucleus. The protein localises to the chromosome. The catalysed reaction is ATP + H2O = ADP + phosphate + H(+). Functionally, acts as a component of the MCM2-7 complex (MCM complex) which is the replicative helicase essential for 'once per cell cycle' DNA replication initiation and elongation in eukaryotic cells. Core component of CDC45-MCM-GINS (CMG) helicase, the molecular machine that unwinds template DNA during replication, and around which the replisome is built. The active ATPase sites in the MCM2-7 ring are formed through the interaction surfaces of two neighboring subunits such that a critical structure of a conserved arginine finger motif is provided in trans relative to the ATP-binding site of the Walker A box of the adjacent subunit. The six ATPase active sites, however, are likely to contribute differentially to the complex helicase activity. In Xenopus tropicalis (Western clawed frog), this protein is DNA replication licensing factor mcm5.